Reading from the N-terminus, the 804-residue chain is Endoplasmin (804 aa).

Residues 1-21 (MRALWVLGLCCVLLTFGSVRA) form the signal peptide. The SRT pseudosubstrate motif signature appears at 42 to 44 (SRT). Asn-62 carries N-linked (GlcNAc...) asparagine glycosylation. Position 64 is a phosphoserine (Ser-64). Asn-107 carries an N-linked (GlcNAc...) asparagine glycan. ATP is bound by residues Asn-107, Asp-149, and Asn-162. Lys-168 is subject to N6-(2-hydroxyisobutyryl)lysine. Ser-172 carries the post-translational modification Phosphoserine. Phe-199 contributes to the ATP binding site. Asn-217 is a glycosylation site (N-linked (GlcNAc...) asparagine). The tract at residues 288-323 (TVEEPMEEEEAAKEEKEESDDEAAVEEEEEEKKPKT) is disordered. Residues 289-317 (VEEPMEEEEAAKEEKEESDDEAAVEEEEE) are compositionally biased toward acidic residues. Residues Ser-306 and Ser-403 each carry the phosphoserine modification. Lys-404 is subject to N6-succinyllysine. The N-linked (GlcNAc...) asparagine glycan is linked to Asn-445. At Ser-447 the chain carries Phosphoserine. Residue Lys-479 is modified to N6-acetyllysine. N-linked (GlcNAc...) asparagine glycans are attached at residues Asn-481 and Asn-502. At Lys-633 the chain carries N6-succinyllysine. The interval 750 to 804 (DPDAKVEEEPEEEPEETTEDTTEDTEQDEDEEMDVGTDEEEQETAKESTAEKDEL) is disordered. The segment covering 757-791 (EEPEEEPEETTEDTTEDTEQDEDEEMDVGTDEEEQ) has biased composition (acidic residues). Residue Thr-786 is modified to Phosphothreonine. Over residues 792-804 (ETAKESTAEKDEL) the composition is skewed to basic and acidic residues. The short motif at 801-804 (KDEL) is the Prevents secretion from ER element.

Belongs to the heat shock protein 90 family. As to quaternary structure, homodimer; disulfide-linked. Component of an EIF2 complex at least composed of CELF1/CUGBP1, CALR, CALR3, EIF2S1, EIF2S2, HSP90B1 and HSPA5. Part of a large chaperone multiprotein complex comprising DNAJB11, HSP90B1, HSPA5, HYOU, PDIA2, PDIA4, PDIA6, PPIB, SDF2L1, UGGT1 and very small amounts of ERP29, but not, or at very low levels, CALR nor CANX. Interacts with AIMP1; regulates its retention in the endoplasmic reticulum. Hyperglycosylated form interacts with OS9; promoting its degradation by the endoplasmic reticulum associated degradation (ERAD). Interacts with CNPY3. This interaction is disrupted in the presence of ATP. Interacts with TLR4 and TLR9, but not with TLR3. Interacts with MZB1 in a calcium-dependent manner. Interacts with METTL23. Interacts with IL1B; the interaction facilitates cargo translocation into the ERGIC. Interacts with EIF2AK3. Phosphorylated by CK2. In terms of processing, N-glycosylated cotranslationally at Asn-217 by STT3A-containing OST-A complex: this glycosylation is constitutive. In response to various stress, 5 additional facultative sites (Asn-62, Asn-107, Asn-445, Asn-481 and Asn-502) can be glycosylated post-translationally by STT3B-containing OST-B complex, leading to a hyperglycosylated form that is degraded by the ER-associated degradation (ERAD) pathway. In normal conditions, the OST-A complex together with CCDC134 prevent glycosylation at facultative sites during protein folding, thereby preventing hyperglycosylation. Mechanistically, nascent HSP90B1 is tethered during translation to a specialized CCDC134-containing translocon that forms a microenvironment for its folding, in which STT3A associates with the SRT pseudosubstrate motif, and prevents access to facultative glycosylation sites until folding is completed, rendering its facultative sites inaccessible to the OST-B complex.

Its subcellular location is the endoplasmic reticulum lumen. It is found in the sarcoplasmic reticulum lumen. The protein localises to the melanosome. The enzyme catalyses ATP + H2O = ADP + phosphate + H(+). In terms of biological role, ATP-dependent chaperone involved in the processing of proteins in the endoplasmic reticulum, regulating their transport. Together with MESD, acts as a modulator of the Wnt pathway by promoting the folding of LRP6, a coreceptor of the canonical Wnt pathway. When associated with CNPY3, required for proper folding of Toll-like receptors. Promotes folding and trafficking of TLR4 to the cell surface. May participate in the unfolding of cytosolic leaderless cargos (lacking the secretion signal sequence) such as the interleukin 1/IL-1 to facilitate their translocation into the ERGIC (endoplasmic reticulum-Golgi intermediate compartment) and secretion; the translocation process is mediated by the cargo receptor TMED10. The chain is Endoplasmin (HSP90B1) from Pongo abelii (Sumatran orangutan).